Here is a 304-residue protein sequence, read N- to C-terminus: Ferrochelatase (304 aa).

Fe cation-binding residues include His-169 and Glu-241.

This sequence belongs to the ferrochelatase family.

The protein resides in the cytoplasm. It carries out the reaction heme b + 2 H(+) = protoporphyrin IX + Fe(2+). It participates in porphyrin-containing compound metabolism; protoheme biosynthesis; protoheme from protoporphyrin-IX: step 1/1. Functionally, catalyzes the ferrous insertion into protoporphyrin IX. This is Ferrochelatase from Thermoplasma volcanium (strain ATCC 51530 / DSM 4299 / JCM 9571 / NBRC 15438 / GSS1).